Consider the following 1011-residue polypeptide: MSFLLVEPDLVTAAAANLAGIRSALSEAAAAASTPTTALASAGADEVSAAVSRLFGAYGQQFQALNARAATFHAEFVSLLNGGAAAYTGAEAASVSSMQALLDAVNAPTQTLLGRPLIGNGADGVAGTGSNAGGNGGPGGILYGNGGNGGAGGNGGAAGLIGNGGAGGAGGAGGAGGAGGAGGTGGLLYGNGGAGGNGGSAAAAGGAGGNALLFGNGGNGGSGASGGAAGHAGTIFGNGGNAGAGSGLAGADGGLFGNGGDGGSSTSKAGGAGGNALFGNGGDGGSSTVAAGGAGGNTLVGNGGAGGAGGTSGLTGSGVAGGAGGSVGLWGSGGAGGDGGAATSLLGVGMNAGAGGAGGNAGLLYGNGGAGGAGGNGGDTTVPLFDSGVGGAGGAGGNASLFGNGGTGGVGGKGGTSSDLASATSGAGGAGGAGGVGGLLYGNGGNGGAGGIGGAAINILANAGAGGAGGAAGSSFIGNGGNGGAGGAGGAAALFSSGVGGAGGSGGTALLLGSGGAGGNGGTGGANSGSLFASPGGTGGAGGHGGAGGLIWGNGGAGGNGGNGGTTADGALEGGTGGIGGTGGSAIAFGNGGQGGAGGTGGDHSGGNGIGGKGGASGNGGNAGQVFGDGGTGGTGGAGGAGSGTKAGGTGSDGGHGGNATLIGNGGDGGAGGAGGAGSPAGAPGNGGTGGTGGVLFGQSGSSGPPGAAALAFPSLSSSVPILGPYEDLIANTVANLASIGNTWLADPAPFLQQYLANQFGYGQLTLTALTDATRDFAIGLAGIPPSLQSALQALAAGDVSGAVTDVLGAVVKVFVSGVDASDLSNILLLGPVGDLFPILSIPGAMSQNFTNVVMTVTDTTIAFSIDTTNLTGVMTFGLPLAMTLNAVGSPITTAIAFAESTTAFVSAVQAGNLQAAAAALVGAPANVANGFLNGEARLPLALPTSATGGIPVTVEVPVGGILAPLQPFQATAVIPVIGPVTVTLEGTPAGGIVPALVNYAPTQLAQAIAP.

The PE domain maps to 1 to 93 (MSFLLVEPDL…AAAYTGAEAA (93 aa)). Residues 130-696 (SNAGGNGGPG…GGTGGTGGVL (567 aa)) form a PGRS domain region. The segment covering 595–696 (GGAGGTGGDH…GGTGGTGGVL (102 aa)) has biased composition (gly residues). The interval 595–701 (GGAGGTGGDH…TGGVLFGQSG (107 aa)) is disordered. The C-terminal domain stretch occupies residues 697–1011 (FGQSGSSGPP…PTQLAQAIAP (315 aa)).

The protein belongs to the mycobacterial PE family. PGRS subfamily.

The protein resides in the secreted. It is found in the cell wall. The protein localises to the cell surface. Mediates suppression of pro-inflammatory immune response in macrophages via modulation of host cytokine response. Required for full virulence. Involved in inhibition of phago-lysosome fusion. This is PE-PGRS family protein PE_PGRS30 from Mycobacterium tuberculosis (strain ATCC 25618 / H37Rv).